Here is a 328-residue protein sequence, read N- to C-terminus: Tetraacyldisaccharide 4'-kinase (328 aa).

55–62 (TAGGNGKT) is a binding site for ATP.

Belongs to the LpxK family.

The catalysed reaction is a lipid A disaccharide + ATP = a lipid IVA + ADP + H(+). Its pathway is glycolipid biosynthesis; lipid IV(A) biosynthesis; lipid IV(A) from (3R)-3-hydroxytetradecanoyl-[acyl-carrier-protein] and UDP-N-acetyl-alpha-D-glucosamine: step 6/6. Its function is as follows. Transfers the gamma-phosphate of ATP to the 4'-position of a tetraacyldisaccharide 1-phosphate intermediate (termed DS-1-P) to form tetraacyldisaccharide 1,4'-bis-phosphate (lipid IVA). The protein is Tetraacyldisaccharide 4'-kinase of Escherichia coli O157:H7.